Consider the following 620-residue polypeptide: Ferric/cupric reductase transmembrane component 7 (620 aa).

The Extracellular portion of the chain corresponds to 1 to 45 (MIEERDLVLSNGIHCIADIHSELYARLKKESQAVTPWVYQKQYGK). A helical transmembrane segment spans residues 46-66 (FVTYFVAVIIFLSLIKKLAFM). The Cytoplasmic portion of the chain corresponds to 67-107 (YYDSSEEFLPEKKNSPTTPSVFLARIMTKLVAFNRYICYRK). A helical transmembrane segment spans residues 108–128 (FPTLIFSYLGIPTSVGTFLVV). The Extracellular portion of the chain corresponds to 129–167 (MATTLYTLLYCFVPHPFYRPCAGFGSPPLSVRAGIMAIS). The Ferric oxidoreductase domain maps to 161 to 320 (AGIMAISLVS…LAVKGYLRPG (160 aa)). Residues 168-188 (LVSFVFSLSGKINVIGWLVGL) form a helical membrane-spanning segment. Residues 189-194 (SYEKIN) are Cytoplasmic-facing. The chain crosses the membrane as a helical span at residues 195-215 (IYHQWASILCLFFSWVHVIPF). The heme site is built by His197 and His211. At 216 to 237 (LRQARHEGGYERMHQRWKASDM) the chain is on the extracellular side. A helical transmembrane segment spans residues 238 to 258 (WRSGVPPILFLNLLWLSSLPI). At 259 to 265 (ARRHFYE) the chain is on the cytoplasmic side. Residues 266–286 (IFLQLHWILAVGFYISLFYHV) form a helical membrane-spanning segment. Residues His271 and His285 each contribute to the heme site. Residues 287–292 (YPELNS) lie on the Extracellular side of the membrane. A helical transmembrane segment spans residues 293–313 (HMYLVATIVVWFAQLFYRLAV). Over 314 to 620 (KGYLRPGRSF…CYLHSESFGY (307 aa)) the chain is Cytoplasmic. One can recognise an FAD-binding FR-type domain in the interval 321–419 (RSFMASTIAN…DGPYGGIERD (99 aa)). 369–375 (HPFSIFP) provides a ligand contact to FAD. A disordered region spans residues 519 to 544 (SDQSDLAKREKDTEFGQDDTESNSTF). A compositionally biased stretch (basic and acidic residues) spans 523-532 (DLAKREKDTE).

It belongs to the ferric reductase (FRE) family. FAD serves as cofactor.

It is found in the cell membrane. It carries out the reaction 2 a Fe(II)-siderophore + NADP(+) + H(+) = 2 a Fe(III)-siderophore + NADPH. Functionally, cell surface metalloreductase. May be involved in copper homeostasis. The polypeptide is Ferric/cupric reductase transmembrane component 7 (FRE7) (Saccharomyces cerevisiae (strain YJM789) (Baker's yeast)).